The following is a 185-amino-acid chain: Peptidyl-tRNA hydrolase (185 aa).

Phenylalanine 12 contributes to the tRNA binding site. The active-site Proton acceptor is histidine 17. TRNA is bound by residues tyrosine 61, asparagine 63, and asparagine 109.

The protein belongs to the PTH family. Monomer.

It localises to the cytoplasm. It catalyses the reaction an N-acyl-L-alpha-aminoacyl-tRNA + H2O = an N-acyl-L-amino acid + a tRNA + H(+). Its function is as follows. Hydrolyzes ribosome-free peptidyl-tRNAs (with 1 or more amino acids incorporated), which drop off the ribosome during protein synthesis, or as a result of ribosome stalling. Functionally, catalyzes the release of premature peptidyl moieties from peptidyl-tRNA molecules trapped in stalled 50S ribosomal subunits, and thus maintains levels of free tRNAs and 50S ribosomes. This chain is Peptidyl-tRNA hydrolase, found in Borrelia garinii subsp. bavariensis (strain ATCC BAA-2496 / DSM 23469 / PBi) (Borreliella bavariensis).